We begin with the raw amino-acid sequence, 218 residues long: Cytochrome b6 (218 aa).

Residues 35–55 traverse the membrane as a helical segment; it reads IFYCLGGITLVCFLIQFATGF. Residue Cys38 participates in heme c binding. Residues His89 and His103 each coordinate heme b. Transmembrane regions (helical) follow at residues 93 to 113, 119 to 139, and 189 to 209; these read ASMMVLMLILHVFRVYLTGGF, LTWVTGVVMAVITVAFGVTGY, and LHTFVLPWSLAVFMLMHFLMI. Positions 190 and 205 each coordinate heme b.

This sequence belongs to the cytochrome b family. PetB subfamily. As to quaternary structure, the 4 large subunits of the cytochrome b6-f complex are cytochrome b6, subunit IV (17 kDa polypeptide, PetD), cytochrome f and the Rieske protein, while the 4 small subunits are PetG, PetL, PetM and PetN. The complex functions as a dimer. Heme b serves as cofactor. Requires heme c as cofactor.

The protein localises to the cellular thylakoid membrane. Its function is as follows. Component of the cytochrome b6-f complex, which mediates electron transfer between photosystem II (PSII) and photosystem I (PSI), cyclic electron flow around PSI, and state transitions. This chain is Cytochrome b6, found in Prochlorococcus marinus subsp. pastoris (strain CCMP1986 / NIES-2087 / MED4).